We begin with the raw amino-acid sequence, 130 residues long: Small ribosomal subunit protein uS8 (130 aa).

The protein belongs to the universal ribosomal protein uS8 family. As to quaternary structure, part of the 30S ribosomal subunit.

Its function is as follows. One of the primary rRNA binding proteins, it binds directly to 16S rRNA central domain where it helps coordinate assembly of the platform of the 30S subunit. The polypeptide is Small ribosomal subunit protein uS8 (Pyrobaculum islandicum (strain DSM 4184 / JCM 9189 / GEO3)).